The primary structure comprises 172 residues: Small ribosomal subunit protein uS5 (172 aa).

In terms of domain architecture, S5 DRBM spans 17-80 (LKEKMIQVNR…DAARRDMVKV (64 aa)).

This sequence belongs to the universal ribosomal protein uS5 family. As to quaternary structure, part of the 30S ribosomal subunit. Contacts proteins S4 and S8.

With S4 and S12 plays an important role in translational accuracy. In terms of biological role, located at the back of the 30S subunit body where it stabilizes the conformation of the head with respect to the body. This is Small ribosomal subunit protein uS5 from Methylibium petroleiphilum (strain ATCC BAA-1232 / LMG 22953 / PM1).